The primary structure comprises 611 residues: Endo-1,4-beta-xylanase A (611 aa).

The signal sequence occupies residues 1–26 (MRTAMAKSLGAAAFLGAALFAHTLAA). A CBM2 domain is found at 27–128 (QTATCSYNIT…SVGGSICSGS (102 aa)). 3 disulfide bridges follow: Cys-31-Cys-125, Cys-184-Cys-215, and Cys-194-Cys-209. The CBM10 domain occupies 183–212 (QCNWYGTLYPLCVTTTNGWGWEDQRSCIAR). The 327-residue stretch at 281-607 (SGGNADIFTS…KPAYQGVVEA (327 aa)) folds into the GH10 domain. Glu-391 serves as the catalytic Proton donor. Glu-510 acts as the Nucleophile in catalysis.

Belongs to the glycosyl hydrolase 10 (cellulase F) family.

It carries out the reaction Endohydrolysis of (1-&gt;4)-beta-D-xylosidic linkages in xylans.. The protein operates within glycan degradation; xylan degradation. This chain is Endo-1,4-beta-xylanase A (xynA), found in Cellvibrio japonicus (strain Ueda107) (Pseudomonas fluorescens subsp. cellulosa).